The primary structure comprises 363 residues: MSGKGLSPAPFNAQPMIVQDADPLRFRVGEQDPKTREFAAFIGDHRYFAAAAAAAAAANPHPHLEFRQNFYSEKPIIGNPNDSGGSDGEDDVDVEEEDEDDDLDGNEGDIGMNKDAGEDSVSAGAVIVVGQDNAAYYSQHFKTVEASFVSRNEESSIAADNGCDFSGRRDLSSSSSNSIESLRTILSDPTTGSLMADAMILPCGHTFGAGGIEQVKQMKACCTCSQPVSEDSITPNLTLRVAVQAFCREENSQSNHPSKRKREGFDQERRAFGVTNHSGRSRNKSNHFPFAVADRVIIKGNKRTPPRFVGREAVVTTQCLNGWYVVKTLDNAESVKLQYRSLAKAPEDPSAKATPNKMVSNWL.

The tract at residues 74–117 (KPIIGNPNDSGGSDGEDDVDVEEEDEDDDLDGNEGDIGMNKDAG) is disordered. Residues 87–107 (DGEDDVDVEEEDEDDDLDGNE) are compositionally biased toward acidic residues. The U-box domain maps to 181 to 253 (SLRTILSDPT…QAFCREENSQ (73 aa)). A disordered region spans residues 343-363 (AKAPEDPSAKATPNKMVSNWL).

It carries out the reaction S-ubiquitinyl-[E2 ubiquitin-conjugating enzyme]-L-cysteine + [acceptor protein]-L-lysine = [E2 ubiquitin-conjugating enzyme]-L-cysteine + N(6)-ubiquitinyl-[acceptor protein]-L-lysine.. Its pathway is protein modification; protein ubiquitination. Functionally, functions as an E3 ubiquitin ligase. The polypeptide is U-box domain-containing protein 62 (PUB62) (Arabidopsis thaliana (Mouse-ear cress)).